The primary structure comprises 490 residues: MDAFVVLVFILSCLFLLSLWRQSSERGKLPPGPTPLPIIGNFLQIDVKDISGSLTNFSKVYGPVFTLYLGMKPTVVLHGYEAVKEALIDHGEEFAGRGSFPVAERVNKGLGIVFSNGSRWKETRRFSLMTLRNLGMGKRSIEDRVQEEAQCLVEELRKTNGSPCDPTFILGCAPCNVICSIIFQNRFDYKDKDFLTFMKKLNENARILSSPWFQVCNNFPLLIDYCPGSHHRITKNINYIRSYLSEKMKEHQESLDVANPRDFIDYYLIKLKQGNYNQQSEFSPENLATTVSDLFAAGTETTSTTLRYALLLLLKHPHVTAKVQEEIDQVVGRHRNPCMQDRSHMPYTDAMIHEVQRFIDLIPTNLPHAVTCDIKFRDYFIPKGTTIITSLSSVLHDSKEFPNPEVFDPGHFLDKNGNFKKSDYFMPFSTGKRMCAGEGLARMELFLFLTTILQNFKLKSLVHPKDIDTTPVLNGFASLPPSYQLCFIPV.

Residue Cys435 participates in heme binding.

Belongs to the cytochrome P450 family. The cofactor is heme.

The protein resides in the endoplasmic reticulum membrane. The protein localises to the microsome membrane. The catalysed reaction is an organic molecule + reduced [NADPH--hemoprotein reductase] + O2 = an alcohol + oxidized [NADPH--hemoprotein reductase] + H2O + H(+). In terms of biological role, catalyzes the hydroxylation of tolbutamide and the N-demethylation of aminopyrine and benzphetamine. This is Cytochrome P450 2C26 (CYP2C26) from Mesocricetus auratus (Golden hamster).